The sequence spans 261 residues: Pantothenate synthetase (261 aa).

29-36 (MGALHNGH) is an ATP binding site. His-36 functions as the Proton donor in the catalytic mechanism. Gln-60 lines the (R)-pantoate pocket. Gln-60 is a beta-alanine binding site. Residue 147-150 (GEKD) participates in ATP binding. Gln-153 is a binding site for (R)-pantoate. An ATP-binding site is contributed by 184 to 187 (LSSR).

It belongs to the pantothenate synthetase family. Homodimer.

Its subcellular location is the cytoplasm. It carries out the reaction (R)-pantoate + beta-alanine + ATP = (R)-pantothenate + AMP + diphosphate + H(+). The protein operates within cofactor biosynthesis; (R)-pantothenate biosynthesis; (R)-pantothenate from (R)-pantoate and beta-alanine: step 1/1. In terms of biological role, catalyzes the condensation of pantoate with beta-alanine in an ATP-dependent reaction via a pantoyl-adenylate intermediate. The polypeptide is Pantothenate synthetase (Francisella tularensis subsp. holarctica (strain FTNF002-00 / FTA)).